A 321-amino-acid chain; its full sequence is Corticotropin-releasing factor-binding protein (321 aa).

The N-terminal stretch at 1–21 (MTPASRPDWCLILLFLAVLRG) is a signal peptide. Disulfide bonds link Cys-59–Cys-80, Cys-103–Cys-140, Cys-182–Cys-204, Cys-237–Cys-264, and Cys-277–Cys-317. N-linked (GlcNAc...) asparagine glycosylation is present at Asn-203.

It belongs to the CRF-binding protein family.

The protein localises to the secreted. In terms of biological role, binds CRF and inactivates it. May prevent inappropriate pituitary-adrenal stimulation in pregnancy. The polypeptide is Corticotropin-releasing factor-binding protein (crhbp) (Xenopus laevis (African clawed frog)).